Consider the following 194-residue polypeptide: High mobility group protein B4 (194 aa).

DNA-binding regions (HMG box) lie at residues 9–79 and 93–161; these read PKAN…MNYF and PRRP…SVYR.

The protein belongs to the HMGB family.

It is found in the nucleus. It localises to the chromosome. The polypeptide is High mobility group protein B4 (HMGB4) (Bos taurus (Bovine)).